Here is a 318-residue protein sequence, read N- to C-terminus: Ethylene-responsive transcription factor FZP (318 aa).

Over residues 1-15 the composition is skewed to low complexity; sequence MNTRGSGSSSSSSSS. 2 disordered regions span residues 1–59 and 158–178; these read MNTR…GRFL and SYGH…SGAS. The segment covering 25-37 has biased composition (pro residues); the sequence is PPKPASQPSPPSS. A DNA-binding region (AP2/ERF) is located at residues 57 to 114; that stretch reads RFLGVRRRPWGRYAAEIRDPTTKERHWLGTFDTAQEAALAYDRAALSMKGAQARTNFV. A compositionally biased stretch (basic residues) spans 160–171; the sequence is GHHHHHHHHHGH.

Belongs to the AP2/ERF transcription factor family. ERF subfamily.

The protein localises to the nucleus. Its function is as follows. Required to prevent the formation of axillary meristems within the spikelet meristem and permit the subsequent establishment of floral meristem identity. Mediates the transition from spikelet to floret meristem. Determines the transition from panicle branching to spikelet formation. May specify floral organ identity by regulating the class B genes (Agamous-like genes) MADS6 and MADS17, as well as class E genes MADS1, MADS7 and MADS8 in floral meristem. Possesses transactivation activity. The sequence is that of Ethylene-responsive transcription factor FZP from Oryza sativa subsp. japonica (Rice).